The sequence spans 208 residues: Ribosomal RNA small subunit methyltransferase G (208 aa).

S-adenosyl-L-methionine contacts are provided by residues G76, L81, 127–128 (VE), and R142.

The protein belongs to the methyltransferase superfamily. RNA methyltransferase RsmG family.

It localises to the cytoplasm. It catalyses the reaction guanosine(527) in 16S rRNA + S-adenosyl-L-methionine = N(7)-methylguanosine(527) in 16S rRNA + S-adenosyl-L-homocysteine. Functionally, specifically methylates the N7 position of guanine in position 527 of 16S rRNA. In Legionella pneumophila (strain Corby), this protein is Ribosomal RNA small subunit methyltransferase G.